A 112-amino-acid polypeptide reads, in one-letter code: HTH-type transcriptional regulator YodB (112 aa).

One can recognise an HTH hxlR-type domain in the interval 6–105 (CPKMESAFSL…WADQFCEPGD (100 aa)).

Negatively regulates yodC and azoR1 which may contribute to the degradation of aromatic compounds. Probably positively regulates the catechol-specific transcription of mhqNOP, mhqED, and mhqA. The sequence is that of HTH-type transcriptional regulator YodB (yodB) from Bacillus subtilis (strain 168).